The primary structure comprises 297 residues: Mycothiol acetyltransferase (297 aa).

N-acetyltransferase domains are found at residues Val-7 to Arg-156 and Val-153 to His-297. Glu-38 is a binding site for 1D-myo-inositol 2-(L-cysteinylamino)-2-deoxy-alpha-D-glucopyranoside. Val-79–Val-81 is an acetyl-CoA binding site. Residues Glu-180, Lys-219, and Glu-227 each contribute to the 1D-myo-inositol 2-(L-cysteinylamino)-2-deoxy-alpha-D-glucopyranoside site. Acetyl-CoA contacts are provided by residues Val-231–Val-233 and Gln-238–Arg-244. Tyr-265 lines the 1D-myo-inositol 2-(L-cysteinylamino)-2-deoxy-alpha-D-glucopyranoside pocket. Asn-270–Arg-275 is a binding site for acetyl-CoA.

Belongs to the acetyltransferase family. MshD subfamily. As to quaternary structure, monomer.

The enzyme catalyses 1D-myo-inositol 2-(L-cysteinylamino)-2-deoxy-alpha-D-glucopyranoside + acetyl-CoA = mycothiol + CoA + H(+). Catalyzes the transfer of acetyl from acetyl-CoA to desacetylmycothiol (Cys-GlcN-Ins) to form mycothiol. This Thermomonospora curvata (strain ATCC 19995 / DSM 43183 / JCM 3096 / KCTC 9072 / NBRC 15933 / NCIMB 10081 / Henssen B9) protein is Mycothiol acetyltransferase.